We begin with the raw amino-acid sequence, 40 residues long: Photosystem II reaction center protein J (40 aa).

A helical transmembrane segment spans residues 8-28 (IPLWVVATIAGLGVITVVGIF).

This sequence belongs to the PsbJ family. PSII is composed of 1 copy each of membrane proteins PsbA, PsbB, PsbC, PsbD, PsbE, PsbF, PsbH, PsbI, PsbJ, PsbK, PsbL, PsbM, PsbT, PsbX, PsbY, PsbZ, Psb30/Ycf12, peripheral proteins PsbO, CyanoQ (PsbQ), PsbU, PsbV and a large number of cofactors. It forms dimeric complexes.

The protein resides in the cellular thylakoid membrane. Its function is as follows. One of the components of the core complex of photosystem II (PSII). PSII is a light-driven water:plastoquinone oxidoreductase that uses light energy to abstract electrons from H(2)O, generating O(2) and a proton gradient subsequently used for ATP formation. It consists of a core antenna complex that captures photons, and an electron transfer chain that converts photonic excitation into a charge separation. This is Photosystem II reaction center protein J from Trichormus variabilis (strain ATCC 29413 / PCC 7937) (Anabaena variabilis).